The primary structure comprises 255 residues: 5'-nucleotidase SurE (255 aa).

The a divalent metal cation site is built by Asp8, Asp9, Ser40, and Asn93.

It belongs to the SurE nucleotidase family. Requires a divalent metal cation as cofactor.

It is found in the cytoplasm. The enzyme catalyses a ribonucleoside 5'-phosphate + H2O = a ribonucleoside + phosphate. Nucleotidase that shows phosphatase activity on nucleoside 5'-monophosphates. The chain is 5'-nucleotidase SurE from Azorhizobium caulinodans (strain ATCC 43989 / DSM 5975 / JCM 20966 / LMG 6465 / NBRC 14845 / NCIMB 13405 / ORS 571).